A 697-amino-acid polypeptide reads, in one-letter code: Elongation factor G 2 (697 aa).

The 276-residue stretch at 6–281 (TNYRNFGIFA…AVVDFLPNPT (276 aa)) folds into the tr-type G domain. GTP is bound by residues 15–22 (AHVDAGKT), 79–83 (DTPGH), and 133–136 (NKLD).

The protein belongs to the TRAFAC class translation factor GTPase superfamily. Classic translation factor GTPase family. EF-G/EF-2 subfamily.

The protein localises to the cytoplasm. Its function is as follows. Catalyzes the GTP-dependent ribosomal translocation step during translation elongation. During this step, the ribosome changes from the pre-translocational (PRE) to the post-translocational (POST) state as the newly formed A-site-bound peptidyl-tRNA and P-site-bound deacylated tRNA move to the P and E sites, respectively. Catalyzes the coordinated movement of the two tRNA molecules, the mRNA and conformational changes in the ribosome. This is Elongation factor G 2 from Trichodesmium erythraeum (strain IMS101).